The sequence spans 307 residues: MLQQRTIKTLTRAVGVGLHSGQRVELTLRPAAPDTGIVFRRVDLPEPVDIPIRAESVVDTRMASTIGVGGAKVHTVEHLMSACAGLGLDNLYIDITAEEVPILDGSSASFVFLLQSAGVVLQNAPKKFIRVTRPVEVREGEGQQLKWARLEPYHGYKLRFEIDFAHPAVDSTGQSVEFDLGSGNYTRDIARARTFGFTKDVEMMRASGLALGGGLDNAIVMDDYKVLNADGLRYDDEFVKHKILDAIGDLYIVGRPLLAAYSAFRSGHAMNNRLLRELLAHEDAWEIATFESERQAPSGFAAPVQAW.

Residues histidine 78, histidine 241, and aspartate 245 each coordinate Zn(2+). Residue histidine 268 is the Proton donor of the active site.

It belongs to the LpxC family. Zn(2+) serves as cofactor.

The catalysed reaction is a UDP-3-O-[(3R)-3-hydroxyacyl]-N-acetyl-alpha-D-glucosamine + H2O = a UDP-3-O-[(3R)-3-hydroxyacyl]-alpha-D-glucosamine + acetate. It functions in the pathway glycolipid biosynthesis; lipid IV(A) biosynthesis; lipid IV(A) from (3R)-3-hydroxytetradecanoyl-[acyl-carrier-protein] and UDP-N-acetyl-alpha-D-glucosamine: step 2/6. Its function is as follows. Catalyzes the hydrolysis of UDP-3-O-myristoyl-N-acetylglucosamine to form UDP-3-O-myristoylglucosamine and acetate, the committed step in lipid A biosynthesis. This chain is UDP-3-O-acyl-N-acetylglucosamine deacetylase, found in Paracidovorax citrulli (strain AAC00-1) (Acidovorax citrulli).